Reading from the N-terminus, the 201-residue chain is RILP-like protein 2 (201 aa).

Residues S14 to G108 form the RH1 domain. Positions L67–S155 form a coiled coil. One can recognise an RH2 domain in the interval R121–Q197. Residues T175–T201 are disordered.

This sequence belongs to the RILPL family.

The protein resides in the cytoplasm. It is found in the cytosol. The protein localises to the cytoskeleton. Its subcellular location is the microtubule organizing center. It localises to the centrosome. The protein resides in the cell projection. It is found in the cilium. Functionally, involved in cell shape and neuronal morphogenesis, positively regulating the establishment and maintenance of dendritic spines. Plays a role in cellular protein transport. The polypeptide is RILP-like protein 2 (rilpl2) (Xenopus laevis (African clawed frog)).